The sequence spans 566 residues: DNA ligase B (566 aa).

The active-site N6-AMP-lysine intermediate is the Lys-125.

This sequence belongs to the NAD-dependent DNA ligase family. LigB subfamily.

It catalyses the reaction NAD(+) + (deoxyribonucleotide)n-3'-hydroxyl + 5'-phospho-(deoxyribonucleotide)m = (deoxyribonucleotide)n+m + AMP + beta-nicotinamide D-nucleotide.. In terms of biological role, catalyzes the formation of phosphodiester linkages between 5'-phosphoryl and 3'-hydroxyl groups in double-stranded DNA using NAD as a coenzyme and as the energy source for the reaction. The protein is DNA ligase B of Pseudomonas putida (strain ATCC 700007 / DSM 6899 / JCM 31910 / BCRC 17059 / LMG 24140 / F1).